The following is a 378-amino-acid chain: uncharacterized protein (378 aa).

Residues 1-11 (MSPMNRQRKNK) show a composition bias toward basic residues. The disordered stretch occupies residues 1–23 (MSPMNRQRKNKSNVLNEKDERPG).

This is an uncharacterized protein from Caenorhabditis elegans.